The sequence spans 95 residues: Co-chaperonin GroES (95 aa).

Belongs to the GroES chaperonin family. As to quaternary structure, heptamer of 7 subunits arranged in a ring. Interacts with the chaperonin GroEL.

It is found in the cytoplasm. Together with the chaperonin GroEL, plays an essential role in assisting protein folding. The GroEL-GroES system forms a nano-cage that allows encapsulation of the non-native substrate proteins and provides a physical environment optimized to promote and accelerate protein folding. GroES binds to the apical surface of the GroEL ring, thereby capping the opening of the GroEL channel. The polypeptide is Co-chaperonin GroES (Rickettsia rickettsii (strain Sheila Smith)).